Here is a 219-residue protein sequence, read N- to C-terminus: Thiamine-phosphate synthase (219 aa).

Residues 44-48 (QFREK) and N79 each bind 4-amino-2-methyl-5-(diphosphooxymethyl)pyrimidine. Residues D80 and D99 each coordinate Mg(2+). Residue S117 coordinates 4-amino-2-methyl-5-(diphosphooxymethyl)pyrimidine. A 2-[(2R,5Z)-2-carboxy-4-methylthiazol-5(2H)-ylidene]ethyl phosphate-binding site is contributed by 143 to 145 (TST). K146 provides a ligand contact to 4-amino-2-methyl-5-(diphosphooxymethyl)pyrimidine. Residues G175 and 195–196 (IS) each bind 2-[(2R,5Z)-2-carboxy-4-methylthiazol-5(2H)-ylidene]ethyl phosphate.

The protein belongs to the thiamine-phosphate synthase family. The cofactor is Mg(2+).

The enzyme catalyses 2-[(2R,5Z)-2-carboxy-4-methylthiazol-5(2H)-ylidene]ethyl phosphate + 4-amino-2-methyl-5-(diphosphooxymethyl)pyrimidine + 2 H(+) = thiamine phosphate + CO2 + diphosphate. It catalyses the reaction 2-(2-carboxy-4-methylthiazol-5-yl)ethyl phosphate + 4-amino-2-methyl-5-(diphosphooxymethyl)pyrimidine + 2 H(+) = thiamine phosphate + CO2 + diphosphate. It carries out the reaction 4-methyl-5-(2-phosphooxyethyl)-thiazole + 4-amino-2-methyl-5-(diphosphooxymethyl)pyrimidine + H(+) = thiamine phosphate + diphosphate. The protein operates within cofactor biosynthesis; thiamine diphosphate biosynthesis; thiamine phosphate from 4-amino-2-methyl-5-diphosphomethylpyrimidine and 4-methyl-5-(2-phosphoethyl)-thiazole: step 1/1. Functionally, condenses 4-methyl-5-(beta-hydroxyethyl)thiazole monophosphate (THZ-P) and 2-methyl-4-amino-5-hydroxymethyl pyrimidine pyrophosphate (HMP-PP) to form thiamine monophosphate (TMP). In Bacillus anthracis (strain A0248), this protein is Thiamine-phosphate synthase.